We begin with the raw amino-acid sequence, 512 residues long: ETS translocation variant 3 (512 aa).

Residues 35-116 (IQLWHFILEL…KGKRFTYKFN (82 aa)) constitute a DNA-binding region (ETS). The segment at 136–222 (VPQSAPPVPT…NAIGGGGIGH (87 aa)) is disordered. Phosphoserine occurs at positions 139, 159, and 315. A compositionally biased stretch (polar residues) spans 158–184 (HSPTNDVQPGRFSASSLTASGQESSNG). The tract at residues 336–512 (PEESTQFSIK…QGLATAAADA (177 aa)) is disordered. Positions 380 to 406 (IKVEPASEKDPESLRQSAREKEEHTQE) are enriched in basic and acidic residues. Residue Lys381 forms a Glycyl lysine isopeptide (Lys-Gly) (interchain with G-Cter in SUMO2) linkage. The residue at position 388 (Lys388) is an N6-acetyllysine; alternate. A Glycyl lysine isopeptide (Lys-Gly) (interchain with G-Cter in SUMO2); alternate cross-link involves residue Lys388. Acidic residues predominate over residues 443–452 (EPLEVTEDIE). Basic and acidic residues-rich tracts occupy residues 453–468 (DRPG…KEDA) and 479–491 (RWND…ELSK).

This sequence belongs to the ETS family.

The protein resides in the nucleus. In terms of biological role, transcriptional repressor that contribute to growth arrest during terminal macrophage differentiation by repressing target genes involved in Ras-dependent proliferation. Represses MMP1 promoter activity. The polypeptide is ETS translocation variant 3 (ETV3) (Pan troglodytes (Chimpanzee)).